Consider the following 59-residue polypeptide: Cuticle protein 7 isoform b (59 aa).

Q1 carries the post-translational modification Pyrrolidone carboxylic acid.

The polypeptide is Cuticle protein 7 isoform b (Limulus polyphemus (Atlantic horseshoe crab)).